Reading from the N-terminus, the 146-residue chain is 3-dehydroquinate dehydratase (146 aa).

Tyrosine 24 acts as the Proton acceptor in catalysis. Residues asparagine 73, histidine 79, and aspartate 86 each contribute to the substrate site. Histidine 99 (proton donor) is an active-site residue. Substrate-binding positions include 100–101 (LS) and arginine 110.

The protein belongs to the type-II 3-dehydroquinase family. Homododecamer.

It carries out the reaction 3-dehydroquinate = 3-dehydroshikimate + H2O. It functions in the pathway metabolic intermediate biosynthesis; chorismate biosynthesis; chorismate from D-erythrose 4-phosphate and phosphoenolpyruvate: step 3/7. Functionally, catalyzes a trans-dehydration via an enolate intermediate. The polypeptide is 3-dehydroquinate dehydratase (Shewanella baltica (strain OS223)).